Consider the following 231-residue polypeptide: GFP-like fluorescent chromoprotein FP538 (231 aa).

Phenylalanine 65 is subject to Phenylalanine amide; atypical. Positions 66–68 form a cross-link, 2-tetrahydro-2-pyridyl-5-imidazolinone (Lys-Gly); sequence KYG. Residue tyrosine 67 is modified to 2,3-didehydrotyrosine.

Belongs to the GFP family. In terms of assembly, homotetramer. Post-translationally, contains a chromophore consisting of modified amino acid residues. The chromophore is formed by autocatalytic backbone condensation between Xaa-N and Gly-(N+2), and oxidation of Tyr-(N+1) to didehydrotyrosine. In addition, the residue N lysine undergoes cyclization. The alpha-amino nitrogen is replaced by the epsilon-amino nitrogen, the peptide chain is broken, residue N-1 is released as an amide, and a double bond is formed between the alpha-carbon and the nitrogen so that a tetrahydropyridine ring results. Maturation of the chromophore requires nothing other than molecular oxygen. As to expression, tentacle and oral disk.

Functionally, pigment protein that is yellow in color. The sequence is that of GFP-like fluorescent chromoprotein FP538 from Zoanthus sp. (Green polyp).